A 47-amino-acid polypeptide reads, in one-letter code: Glyceraldehyde-3-phosphate dehydrogenase, cytosolic (47 aa).

Belongs to the glyceraldehyde-3-phosphate dehydrogenase family. In terms of assembly, homotetramer.

Its subcellular location is the cytoplasm. The catalysed reaction is D-glyceraldehyde 3-phosphate + phosphate + NAD(+) = (2R)-3-phospho-glyceroyl phosphate + NADH + H(+). It participates in carbohydrate degradation; glycolysis; pyruvate from D-glyceraldehyde 3-phosphate: step 1/5. This chain is Glyceraldehyde-3-phosphate dehydrogenase, cytosolic, found in Pseudotsuga menziesii (Douglas-fir).